A 200-amino-acid polypeptide reads, in one-letter code: Recombination protein RecR (200 aa).

A C4-type zinc finger spans residues 59–74 (CEKCNTFTEAQVCEVC). The Toprim domain occupies 82 to 177 (ALLCVVETPA…AVTRLARGVP (96 aa)).

This sequence belongs to the RecR family.

In terms of biological role, may play a role in DNA repair. It seems to be involved in an RecBC-independent recombinational process of DNA repair. It may act with RecF and RecO. The sequence is that of Recombination protein RecR from Burkholderia pseudomallei (strain 1106a).